A 356-amino-acid chain; its full sequence is Histidinol-phosphate aminotransferase (356 aa).

Lysine 214 is modified (N6-(pyridoxal phosphate)lysine).

It belongs to the class-II pyridoxal-phosphate-dependent aminotransferase family. Histidinol-phosphate aminotransferase subfamily. In terms of assembly, homodimer. Requires pyridoxal 5'-phosphate as cofactor.

It carries out the reaction L-histidinol phosphate + 2-oxoglutarate = 3-(imidazol-4-yl)-2-oxopropyl phosphate + L-glutamate. It functions in the pathway amino-acid biosynthesis; L-histidine biosynthesis; L-histidine from 5-phospho-alpha-D-ribose 1-diphosphate: step 7/9. The sequence is that of Histidinol-phosphate aminotransferase from Shigella boydii serotype 4 (strain Sb227).